The following is a 121-amino-acid chain: Small ribosomal subunit protein uS13 (121 aa).

The tract at residues 97–121 (VRGQRTRTNARTRRGARKTVAGKKK) is disordered. The segment covering 100–121 (QRTRTNARTRRGARKTVAGKKK) has biased composition (basic residues).

It belongs to the universal ribosomal protein uS13 family. Part of the 30S ribosomal subunit. Forms a loose heterodimer with protein S19. Forms two bridges to the 50S subunit in the 70S ribosome.

In terms of biological role, located at the top of the head of the 30S subunit, it contacts several helices of the 16S rRNA. In the 70S ribosome it contacts the 23S rRNA (bridge B1a) and protein L5 of the 50S subunit (bridge B1b), connecting the 2 subunits; these bridges are implicated in subunit movement. Contacts the tRNAs in the A and P-sites. This Prochlorococcus marinus (strain MIT 9303) protein is Small ribosomal subunit protein uS13.